The following is a 205-amino-acid chain: Holliday junction branch migration complex subunit RuvA (205 aa).

Residues 1 to 63 (MIGMLRGHVE…QDAITLFGFG (63 aa)) are domain I. The interval 64–142 (TLASKRMFLQ…LSQIEGSSAT (79 aa)) is domain II. Positions 143–145 (AST) are flexible linker. The tract at residues 146 to 205 (PEDTGAEQVVEGLMSLGWHQQDAAHAVQTVCADNQIETPLNAKDVPRVLKLALTSLDRGR) is domain III.

It belongs to the RuvA family. As to quaternary structure, homotetramer. Forms an RuvA(8)-RuvB(12)-Holliday junction (HJ) complex. HJ DNA is sandwiched between 2 RuvA tetramers; dsDNA enters through RuvA and exits via RuvB. An RuvB hexamer assembles on each DNA strand where it exits the tetramer. Each RuvB hexamer is contacted by two RuvA subunits (via domain III) on 2 adjacent RuvB subunits; this complex drives branch migration. In the full resolvosome a probable DNA-RuvA(4)-RuvB(12)-RuvC(2) complex forms which resolves the HJ.

The protein resides in the cytoplasm. Functionally, the RuvA-RuvB-RuvC complex processes Holliday junction (HJ) DNA during genetic recombination and DNA repair, while the RuvA-RuvB complex plays an important role in the rescue of blocked DNA replication forks via replication fork reversal (RFR). RuvA specifically binds to HJ cruciform DNA, conferring on it an open structure. The RuvB hexamer acts as an ATP-dependent pump, pulling dsDNA into and through the RuvAB complex. HJ branch migration allows RuvC to scan DNA until it finds its consensus sequence, where it cleaves and resolves the cruciform DNA. This is Holliday junction branch migration complex subunit RuvA from Bifidobacterium adolescentis (strain ATCC 15703 / DSM 20083 / NCTC 11814 / E194a).